Consider the following 330-residue polypeptide: Ketol-acid reductoisomerase (NADP(+)) (330 aa).

The KARI N-terminal Rossmann domain maps to 1–181 (MKVFYDSDFK…GLSRAGVIQT (181 aa)). NADP(+) is bound by residues 24–27 (YGSQ), arginine 47, serine 52, and 82–85 (DELQ). Histidine 107 is an active-site residue. NADP(+) is bound at residue glycine 133. One can recognise a KARI C-terminal knotted domain in the interval 182–327 (TFKEETETDL…AKLRKMCGLE (146 aa)). Residues aspartate 190, glutamate 194, glutamate 226, and glutamate 230 each contribute to the Mg(2+) site. A substrate-binding site is contributed by serine 251.

It belongs to the ketol-acid reductoisomerase family. Mg(2+) serves as cofactor.

It catalyses the reaction (2R)-2,3-dihydroxy-3-methylbutanoate + NADP(+) = (2S)-2-acetolactate + NADPH + H(+). The catalysed reaction is (2R,3R)-2,3-dihydroxy-3-methylpentanoate + NADP(+) = (S)-2-ethyl-2-hydroxy-3-oxobutanoate + NADPH + H(+). Its pathway is amino-acid biosynthesis; L-isoleucine biosynthesis; L-isoleucine from 2-oxobutanoate: step 2/4. The protein operates within amino-acid biosynthesis; L-valine biosynthesis; L-valine from pyruvate: step 2/4. Involved in the biosynthesis of branched-chain amino acids (BCAA). Catalyzes an alkyl-migration followed by a ketol-acid reduction of (S)-2-acetolactate (S2AL) to yield (R)-2,3-dihydroxy-isovalerate. In the isomerase reaction, S2AL is rearranged via a Mg-dependent methyl migration to produce 3-hydroxy-3-methyl-2-ketobutyrate (HMKB). In the reductase reaction, this 2-ketoacid undergoes a metal-dependent reduction by NADPH to yield (R)-2,3-dihydroxy-isovalerate. This is Ketol-acid reductoisomerase (NADP(+)) from Methanococcus maripaludis (strain DSM 14266 / JCM 13030 / NBRC 101832 / S2 / LL).